Reading from the N-terminus, the 315-residue chain is Ribosomal RNA small subunit methyltransferase H (315 aa).

S-adenosyl-L-methionine is bound by residues 37-39 (GGH), aspartate 57, phenylalanine 83, aspartate 105, and glutamine 112.

The protein belongs to the methyltransferase superfamily. RsmH family.

It is found in the cytoplasm. The enzyme catalyses cytidine(1402) in 16S rRNA + S-adenosyl-L-methionine = N(4)-methylcytidine(1402) in 16S rRNA + S-adenosyl-L-homocysteine + H(+). Functionally, specifically methylates the N4 position of cytidine in position 1402 (C1402) of 16S rRNA. In Pseudomonas fluorescens (strain Pf0-1), this protein is Ribosomal RNA small subunit methyltransferase H.